We begin with the raw amino-acid sequence, 353 residues long: Fe(3+) ions import ATP-binding protein FbpC (353 aa).

The ABC transporter domain occupies 9–239; sequence VVFENVRKTF…PASSFIADFM (231 aa). Residue 41–48 participates in ATP binding; it reads GPSGCGKT.

It belongs to the ABC transporter superfamily. Fe(3+) ion importer (TC 3.A.1.10) family. In terms of assembly, the complex is composed of two ATP-binding proteins (FbpC), two transmembrane proteins (FbpB) and a solute-binding protein (FbpA).

Its subcellular location is the cell inner membrane. It carries out the reaction Fe(3+)(out) + ATP + H2O = Fe(3+)(in) + ADP + phosphate + H(+). Part of the ABC transporter complex FbpABC involved in Fe(3+) ions import. Responsible for energy coupling to the transport system. This chain is Fe(3+) ions import ATP-binding protein FbpC, found in Agrobacterium fabrum (strain C58 / ATCC 33970) (Agrobacterium tumefaciens (strain C58)).